Reading from the N-terminus, the 180-residue chain is Crossover junction endodeoxyribonuclease RuvC (180 aa).

Residues aspartate 7, glutamate 66, and aspartate 138 contribute to the active site. Residues aspartate 7, glutamate 66, and aspartate 138 each coordinate Mg(2+).

This sequence belongs to the RuvC family. Homodimer which binds Holliday junction (HJ) DNA. The HJ becomes 2-fold symmetrical on binding to RuvC with unstacked arms; it has a different conformation from HJ DNA in complex with RuvA. In the full resolvosome a probable DNA-RuvA(4)-RuvB(12)-RuvC(2) complex forms which resolves the HJ. Requires Mg(2+) as cofactor.

The protein localises to the cytoplasm. The enzyme catalyses Endonucleolytic cleavage at a junction such as a reciprocal single-stranded crossover between two homologous DNA duplexes (Holliday junction).. Its function is as follows. The RuvA-RuvB-RuvC complex processes Holliday junction (HJ) DNA during genetic recombination and DNA repair. Endonuclease that resolves HJ intermediates. Cleaves cruciform DNA by making single-stranded nicks across the HJ at symmetrical positions within the homologous arms, yielding a 5'-phosphate and a 3'-hydroxyl group; requires a central core of homology in the junction. The consensus cleavage sequence is 5'-(A/T)TT(C/G)-3'. Cleavage occurs on the 3'-side of the TT dinucleotide at the point of strand exchange. HJ branch migration catalyzed by RuvA-RuvB allows RuvC to scan DNA until it finds its consensus sequence, where it cleaves and resolves the cruciform DNA. The sequence is that of Crossover junction endodeoxyribonuclease RuvC from Burkholderia lata (strain ATCC 17760 / DSM 23089 / LMG 22485 / NCIMB 9086 / R18194 / 383).